The sequence spans 304 residues: Probable actin-related protein 2/3 complex subunit 2 (304 aa).

Belongs to the ARPC2 family. Component of the Arp2/3 complex.

It localises to the cytoplasm. Its subcellular location is the cytoskeleton. Functionally, functions as actin-binding component of the Arp2/3 complex which is involved in regulation of actin polymerization and together with an activating nucleation-promoting factor (NPF) mediates the formation of branched actin networks. Seems to contact the mother actin filament. The polypeptide is Probable actin-related protein 2/3 complex subunit 2 (Arc-p34) (Anopheles gambiae (African malaria mosquito)).